A 235-amino-acid polypeptide reads, in one-letter code: tRNA (guanine-N(1)-)-methyltransferase (235 aa).

S-adenosyl-L-methionine-binding positions include glycine 113 and 133–138; that span reads IGDYIL.

It belongs to the RNA methyltransferase TrmD family. As to quaternary structure, homodimer.

It localises to the cytoplasm. It carries out the reaction guanosine(37) in tRNA + S-adenosyl-L-methionine = N(1)-methylguanosine(37) in tRNA + S-adenosyl-L-homocysteine + H(+). Functionally, specifically methylates guanosine-37 in various tRNAs. The chain is tRNA (guanine-N(1)-)-methyltransferase from Wolbachia sp. subsp. Brugia malayi (strain TRS).